Consider the following 741-residue polypeptide: NAD(P)H-quinone oxidoreductase subunit 5, chloroplastic (741 aa).

16 helical membrane-spanning segments follow: residues 9–29 (WIIP…LLLF), 40–60 (WTFL…YLSI), 89–109 (IDPL…LVLI), 125–145 (FAYM…SNLI), 147–167 (VYFF…FWFT), 185–205 (GDFG…SFEF), 221–241 (VNLL…IAKS), 258–278 (TPIS…FLVA), 280–300 (LLPL…IGII), 327–347 (LGYM…FHLI), 354–374 (ALLF…VGYS), 396–416 (TAFL…CFWS), 425–445 (LLFS…TAFY), 547–567 (ILFP…IGIP), 602–622 (FLQN…IAYC), and 720–740 (ISSY…ILFY).

It belongs to the complex I subunit 5 family. NDH is composed of at least 16 different subunits, 5 of which are encoded in the nucleus.

It is found in the plastid. The protein localises to the chloroplast thylakoid membrane. It catalyses the reaction a plastoquinone + NADH + (n+1) H(+)(in) = a plastoquinol + NAD(+) + n H(+)(out). The enzyme catalyses a plastoquinone + NADPH + (n+1) H(+)(in) = a plastoquinol + NADP(+) + n H(+)(out). NDH shuttles electrons from NAD(P)H:plastoquinone, via FMN and iron-sulfur (Fe-S) centers, to quinones in the photosynthetic chain and possibly in a chloroplast respiratory chain. The immediate electron acceptor for the enzyme in this species is believed to be plastoquinone. Couples the redox reaction to proton translocation, and thus conserves the redox energy in a proton gradient. The sequence is that of NAD(P)H-quinone oxidoreductase subunit 5, chloroplastic (ndhF) from Arabis hirsuta (Hairy rock-cress).